The sequence spans 520 residues: Laccase-2 (520 aa).

An N-terminal signal peptide occupies residues 1–19 (MRFSNAFVLVAACISSVLA). Plastocyanin-like domains follow at residues 21–145 (TKTF…FVVY), 157–305 (VDDE…LTLA), and 375–488 (TVPV…FAEA). 2 residues coordinate Cu cation: His82 and His84. Intrachain disulfides connect Cys103–Cys509 and Cys135–Cys229. Residue Asn108 is glycosylated (N-linked (GlcNAc...) asparagine). Residues His127 and His129 each contribute to the Cu cation site. N-linked (GlcNAc...) asparagine glycans are attached at residues Asn241 and Asn299. Residues His417, His420, His422, His470, Cys471, His472, and His476 each contribute to the Cu cation site. The N-linked (GlcNAc...) asparagine glycan is linked to Asn492.

The protein belongs to the multicopper oxidase family. Cu cation is required as a cofactor.

The protein localises to the secreted. The catalysed reaction is 4 hydroquinone + O2 = 4 benzosemiquinone + 2 H2O. Its function is as follows. Lignin degradation and detoxification of lignin-derived products. The polypeptide is Laccase-2 (lcc2) (Agaricus bisporus (White button mushroom)).